Consider the following 93-residue polypeptide: DNA-directed RNA polymerase subunit Rpo11 (93 aa).

It belongs to the archaeal Rpo11/eukaryotic RPB11/RPC19 RNA polymerase subunit family. Part of the RNA polymerase complex.

It is found in the cytoplasm. The enzyme catalyses RNA(n) + a ribonucleoside 5'-triphosphate = RNA(n+1) + diphosphate. DNA-dependent RNA polymerase (RNAP) catalyzes the transcription of DNA into RNA using the four ribonucleoside triphosphates as substrates. The chain is DNA-directed RNA polymerase subunit Rpo11 from Methanocella arvoryzae (strain DSM 22066 / NBRC 105507 / MRE50).